The chain runs to 701 residues: Polyribonucleotide nucleotidyltransferase (701 aa).

2 residues coordinate Mg(2+): Asp-485 and Asp-491. Positions Pro-552–Ile-611 constitute a KH domain. In terms of domain architecture, S1 motif spans Gly-621 to Lys-689.

This sequence belongs to the polyribonucleotide nucleotidyltransferase family. As to quaternary structure, component of the RNA degradosome, which is a multiprotein complex involved in RNA processing and mRNA degradation. Requires Mg(2+) as cofactor.

The protein resides in the cytoplasm. It carries out the reaction RNA(n+1) + phosphate = RNA(n) + a ribonucleoside 5'-diphosphate. Its function is as follows. Involved in mRNA degradation. Catalyzes the phosphorolysis of single-stranded polyribonucleotides processively in the 3'- to 5'-direction. This Shewanella piezotolerans (strain WP3 / JCM 13877) protein is Polyribonucleotide nucleotidyltransferase.